The primary structure comprises 575 residues: Serine/threonine-protein kinase STY46 (575 aa).

The tract at residues 116 to 140 (ADLDSTSNDAGHSSPTRKSIHPPPA) is disordered. Positions 118 to 132 (LDSTSNDAGHSSPTR) are enriched in polar residues. An ACT domain is found at 178–252 (EITFSTEDKP…AKIELQSQSW (75 aa)). The 254-residue stretch at 290–543 (LKFGHKIASG…EIIEQLQEIA (254 aa)) folds into the Protein kinase domain. Residues 296 to 304 (IASGSYGDL) and Lys-317 contribute to the ATP site. The active-site Proton acceptor is the Asp-411. Phosphothreonine is present on Thr-443.

It belongs to the protein kinase superfamily. Ser/Thr protein kinase family. In terms of processing, autophosphorylated on serine and threonine residues. Autophosphorylated at Thr-443.

The protein resides in the cytoplasm. The protein localises to the cytosol. The enzyme catalyses L-seryl-[protein] + ATP = O-phospho-L-seryl-[protein] + ADP + H(+). It carries out the reaction L-threonyl-[protein] + ATP = O-phospho-L-threonyl-[protein] + ADP + H(+). Its activity is regulated as follows. Activated by autophosphorylation at Thr-443. In terms of biological role, serine/threonine protein kinase that specifically phosphorylates chloroplast precursor proteins in the cytosol within the cleavable presequences (transit peptides). May be part of a cytosolic regulatory network involved in chloroplast protein import. Does not phosphorylate mitochondrion precursor proteins. Specific for ATP and does not utilize other NTPs. Plays a role in chloroplast biogenesis and differentiation in cotyledons, possibly through phosphorylation of chloroplast preproteins. The polypeptide is Serine/threonine-protein kinase STY46 (Arabidopsis thaliana (Mouse-ear cress)).